The primary structure comprises 189 residues: Protein OXIDATIVE STRESS 3 LIKE 2 (189 aa).

Disordered stretches follow at residues 22-49 and 128-147; these read SSST…SSYN and AMSQ…LPTL. Positions 33-44 are enriched in acidic residues; the sequence is NSDDDEGGENEI.

It is found in the nucleus. This Arabidopsis thaliana (Mouse-ear cress) protein is Protein OXIDATIVE STRESS 3 LIKE 2.